The chain runs to 304 residues: Xylanase inhibitor protein 1 (304 aa).

The N-terminal stretch at 1 to 30 (MAPLAARRPACLLALLSVAAALFLTPTALA) is a signal peptide. The 269-residue stretch at 36-304 (GQVTVFWGRN…NYSSLIKYYA (269 aa)) folds into the GH18 domain. A disulfide bridge connects residues cysteine 55 and cysteine 96. Asparagine 119 carries an N-linked (GlcNAc...) asparagine glycan. The active-site Proton donor is the glutamate 158. Residues 178-184 (IRGGPGK) form an interaction with fungal GH11 xylanase region. Cysteine 194 and cysteine 225 form a disulfide bridge. An interaction with fungal GH10 xylanase region spans residues 262–275 (HPKNVYYGVAPVAQ). Asparagine 295 is a glycosylation site (N-linked (GlcNAc...) asparagine).

It belongs to the glycosyl hydrolase 18 family. Xylanase inhibitor subfamily. In terms of assembly, binds to fungal GH10 and GH11 xylanases. Also forms a ternary complex with barley alpha-amylase 1 (AMY1) and insoluble starch.

The protein resides in the secreted. Its function is as follows. Fungal xylanase inhibitor. Possesses competitive inhibiting activity against fungal endo-1,4-beta-D-xylanases belonging to glycoside hydrolase family 10 (GH10) and family 11 (GH11). Possesses also inhibitory activity towards barley alpha-amylases. Binding to xylanases or amylases is necessary for inhibition activity. May function in plant defense against secreted fungal pathogen xylanases. Is similar to class III chitinases, but does not exhibit chitinase activity. The protein is Xylanase inhibitor protein 1 of Triticum aestivum (Wheat).